Reading from the N-terminus, the 348-residue chain is D-alanine--D-alanine ligase (348 aa).

Residues 132–334 (KRVLESAGIP…YAELIEELVR (203 aa)) form the ATP-grasp domain. Position 162–217 (162–217 (EAALSYPVFVKPANMGSSVGISKAESEEELRAAILLALTYDSRILIEQGVLAREIE)) interacts with ATP. Positions 288, 301, and 303 each coordinate Mg(2+).

Belongs to the D-alanine--D-alanine ligase family. Requires Mg(2+) as cofactor. Mn(2+) serves as cofactor.

It localises to the cytoplasm. It catalyses the reaction 2 D-alanine + ATP = D-alanyl-D-alanine + ADP + phosphate + H(+). Its pathway is cell wall biogenesis; peptidoglycan biosynthesis. Its function is as follows. Cell wall formation. The chain is D-alanine--D-alanine ligase from Streptococcus equi subsp. zooepidemicus (strain H70).